The sequence spans 556 residues: 2-isopropylmalate synthase (556 aa).

The 275-residue stretch at Pro-33–Asp-307 folds into the Pyruvate carboxyltransferase domain. Residues Asp-42, His-246, His-248, and Asn-282 each contribute to the Mg(2+) site. A regulatory domain region spans residues Ala-439–Ala-556.

This sequence belongs to the alpha-IPM synthase/homocitrate synthase family. LeuA type 2 subfamily. In terms of assembly, homodimer. Mg(2+) is required as a cofactor.

It localises to the cytoplasm. The enzyme catalyses 3-methyl-2-oxobutanoate + acetyl-CoA + H2O = (2S)-2-isopropylmalate + CoA + H(+). It participates in amino-acid biosynthesis; L-leucine biosynthesis; L-leucine from 3-methyl-2-oxobutanoate: step 1/4. Functionally, catalyzes the condensation of the acetyl group of acetyl-CoA with 3-methyl-2-oxobutanoate (2-ketoisovalerate) to form 3-carboxy-3-hydroxy-4-methylpentanoate (2-isopropylmalate). This Stutzerimonas stutzeri (strain A1501) (Pseudomonas stutzeri) protein is 2-isopropylmalate synthase.